The chain runs to 716 residues: uncharacterized protein (716 aa).

2 disordered regions span residues 84–103 (SPSIIGVPSETQTSPVERYP) and 153–189 (VTDEDSDFEPQTQRPQSIARKRPGVVPSSLHSSSQTQ). S97 is modified (phosphoserine). Glycyl lysine isopeptide (Lys-Gly) (interchain with G-Cter in SUMO2) cross-links involve residues K201, K204, K237, K283, and K626.

This is an uncharacterized protein from Homo sapiens (Human).